Reading from the N-terminus, the 50-residue chain is F420-non-reducing hydrogenase vhu subunit U (50 aa).

Residues Sec27 and Cys30 each coordinate Ni(2+). A non-standard amino acid (selenocysteine) is located at residue Sec27. The propeptide at 34 to 50 (IIVKDEKGNKIIEVIKE) is removed in mature form.

This sequence belongs to the [NiFe]/[NiFeSe] hydrogenase large subunit family. The F420-non-reducing hydrogenase vhu is composed of four subunits; VhuA, VhuD, VhuG and VhuU. It depends on Ni(2+) as a cofactor.

The sequence is that of F420-non-reducing hydrogenase vhu subunit U (vhuU) from Methanocaldococcus jannaschii (strain ATCC 43067 / DSM 2661 / JAL-1 / JCM 10045 / NBRC 100440) (Methanococcus jannaschii).